Here is a 147-residue protein sequence, read N- to C-terminus: uncharacterized protein (147 aa).

Residues 3 to 23 (APMVGMVVLVVTLGAAVLALS) traverse the membrane as a helical segment.

It to M.tuberculosis Rv1312.

The protein localises to the membrane. This is an uncharacterized protein from Mycobacterium leprae (strain TN).